We begin with the raw amino-acid sequence, 170 residues long: Large ribosomal subunit protein uL5 (170 aa).

It belongs to the universal ribosomal protein uL5 family. In terms of assembly, part of the 50S ribosomal subunit; contacts the 5S rRNA and probably tRNA. Forms a bridge to the 30S subunit in the 70S ribosome.

In terms of biological role, this is one of the proteins that bind and probably mediate the attachment of the 5S RNA into the large ribosomal subunit, where it forms part of the central protuberance. In the 70S ribosome it contacts protein S13 of the 30S subunit (bridge B1b), connecting the 2 subunits; this bridge is implicated in subunit movement. May contact the P site tRNA; the 5S rRNA and some of its associated proteins might help stabilize positioning of ribosome-bound tRNAs. This chain is Large ribosomal subunit protein uL5, found in Thermoplasma volcanium (strain ATCC 51530 / DSM 4299 / JCM 9571 / NBRC 15438 / GSS1).